A 350-amino-acid polypeptide reads, in one-letter code: Probable lactoylglutathione lyase, chloroplastic (350 aa).

The transit peptide at 1 to 61 (MVRIIPMAAS…KLLRRSVNCL (61 aa)) directs the protein to the chloroplast. VOC domains are found at residues 88 to 212 (RMLH…LLER) and 218 to 342 (PLCQ…FVDN). H91 is a binding site for Zn(2+). R95 provides a ligand contact to substrate. E142 serves as a coordination point for Zn(2+). Residues N146 and H160 each contribute to the substrate site. Zn(2+) contacts are provided by H160 and E208. The active-site Proton donor/acceptor is the E208.

It belongs to the glyoxalase I family. The cofactor is Zn(2+).

The protein localises to the plastid. It localises to the chloroplast stroma. It carries out the reaction (R)-S-lactoylglutathione = methylglyoxal + glutathione. The protein operates within secondary metabolite metabolism; methylglyoxal degradation; (R)-lactate from methylglyoxal: step 1/2. In terms of biological role, catalyzes the conversion of hemimercaptal, formed from methylglyoxal and glutathione, to S-lactoylglutathione. This chain is Probable lactoylglutathione lyase, chloroplastic, found in Arabidopsis thaliana (Mouse-ear cress).